Reading from the N-terminus, the 427-residue chain is Queuine tRNA-ribosyltransferase catalytic subunit (427 aa).

The active-site Proton acceptor is the Asp99. Residues 99-103, Asp153, Gln196, and Gly223 contribute to the substrate site; that span reads DSGGF. The tract at residues 254–260 is RNA binding; it reads GVGFAAD. The active-site Nucleophile is Asp273. Positions 278 to 282 are RNA binding; important for wobble base 34 recognition; the sequence is TRTAR. The Zn(2+) site is built by Cys311, Cys313, Cys316, and His341. A disordered region spans residues 395–427; the sequence is PADPERIDEQDQKPKTEKRRETEDVAEEQVASS. Over residues 397 to 417 the composition is skewed to basic and acidic residues; sequence DPERIDEQDQKPKTEKRRETE.

Belongs to the queuine tRNA-ribosyltransferase family. In terms of assembly, heterodimer of a catalytic subunit and an accessory subunit. Zn(2+) serves as cofactor.

It localises to the cytoplasm. It catalyses the reaction guanosine(34) in tRNA + queuine = queuosine(34) in tRNA + guanine. Its function is as follows. Catalytic subunit of the queuine tRNA-ribosyltransferase (TGT) that catalyzes the base-exchange of a guanine (G) residue with queuine (Q) at position 34 (anticodon wobble position) in tRNAs with GU(N) anticodons (tRNA-Asp, -Asn, -His and -Tyr), resulting in the hypermodified nucleoside queuosine (7-(((4,5-cis-dihydroxy-2-cyclopenten-1-yl)amino)methyl)-7-deazaguanosine). Catalysis occurs through a double-displacement mechanism. The nucleophile active site attacks the C1' of nucleotide 34 to detach the guanine base from the RNA, forming a covalent enzyme-RNA intermediate. The proton acceptor active site deprotonates the incoming queuine, allowing a nucleophilic attack on the C1' of the ribose to form the product. The chain is Queuine tRNA-ribosyltransferase catalytic subunit (Tgt) from Drosophila melanogaster (Fruit fly).